The primary structure comprises 126 residues: Arginine decarboxylase proenzyme (126 aa).

The Schiff-base intermediate with substrate; via pyruvic acid role is filled by Ser-74. A Pyruvic acid (Ser); by autocatalysis modification is found at Ser-74. His-79 acts as the Proton acceptor; for processing activity in catalysis. Residue Cys-94 is the Proton donor; for catalytic activity of the active site.

Belongs to the prokaryotic AdoMetDC family. Type 1 subfamily. Heterooctamer of four alpha and four beta chains arranged as a tetramer of alpha/beta heterodimers. The cofactor is pyruvate. Post-translationally, is synthesized initially as an inactive proenzyme. Formation of the active enzyme involves a self-maturation process in which the active site pyruvoyl group is generated from an internal serine residue via an autocatalytic post-translational modification. Two non-identical subunits are generated from the proenzyme in this reaction, and the pyruvate is formed at the N-terminus of the alpha chain, which is derived from the carboxyl end of the proenzyme. The post-translation cleavage follows an unusual pathway, termed non-hydrolytic serinolysis, in which the side chain hydroxyl group of the serine supplies its oxygen atom to form the C-terminus of the beta chain, while the remainder of the serine residue undergoes an oxidative deamination to produce ammonia and the pyruvoyl group blocking the N-terminus of the alpha chain.

The catalysed reaction is L-arginine + H(+) = agmatine + CO2. It participates in amine and polyamine biosynthesis; agmatine biosynthesis; agmatine from L-arginine: step 1/1. In terms of biological role, specifically catalyzes the decarboxylation of L-arginine to agmatine. Has no S-adenosylmethionine decarboxylase (AdoMetDC) activity. The sequence is that of Arginine decarboxylase proenzyme from Pyrobaculum calidifontis (strain DSM 21063 / JCM 11548 / VA1).